Here is a 382-residue protein sequence, read N- to C-terminus: Na(+)/H(+) antiporter NhaA (382 aa).

10 helical membrane-spanning segments follow: residues 11-31 (FSVP…LDPA), 47-67 (FHFV…AVEI), 88-108 (LATL…NAII), 116-136 (GWGI…RLVF), 145-165 (FLLL…AVFY), 170-190 (HPTE…AYIL), 261-283 (IVVD…SSVG), 299-319 (LGIF…PQQV), 327-347 (TGLV…VAFV), and 353-373 (GSAK…IMLG).

It belongs to the NhaA Na(+)/H(+) (TC 2.A.33) antiporter family.

It is found in the cell inner membrane. It carries out the reaction Na(+)(in) + 2 H(+)(out) = Na(+)(out) + 2 H(+)(in). Na(+)/H(+) antiporter that extrudes sodium in exchange for external protons. The polypeptide is Na(+)/H(+) antiporter NhaA (Geobacter sulfurreducens (strain ATCC 51573 / DSM 12127 / PCA)).